The chain runs to 279 residues: 2-dehydro-3-deoxyphosphooctonate aldolase (279 aa).

The protein belongs to the KdsA family.

The protein resides in the cytoplasm. The catalysed reaction is D-arabinose 5-phosphate + phosphoenolpyruvate + H2O = 3-deoxy-alpha-D-manno-2-octulosonate-8-phosphate + phosphate. It functions in the pathway carbohydrate biosynthesis; 3-deoxy-D-manno-octulosonate biosynthesis; 3-deoxy-D-manno-octulosonate from D-ribulose 5-phosphate: step 2/3. It participates in bacterial outer membrane biogenesis; lipopolysaccharide biosynthesis. The polypeptide is 2-dehydro-3-deoxyphosphooctonate aldolase (Bartonella henselae (strain ATCC 49882 / DSM 28221 / CCUG 30454 / Houston 1) (Rochalimaea henselae)).